We begin with the raw amino-acid sequence, 724 residues long: Protein arginine N-methyltransferase 1.6 (724 aa).

SAM-dependent MTase PRMT-type domains follow at residues 61–388 and 395–721; these read NDQP…YNLK and HERT…IVTH. Residues Glu183 and Glu192 contribute to the active site.

It belongs to the class I-like SAM-binding methyltransferase superfamily. Protein arginine N-methyltransferase family. PRMT7 subfamily.

Arginine methyltransferase that can both catalyze the formation of omega-N monomethylarginine (MMA) and symmetrical dimethylarginine (sDMA). This is Protein arginine N-methyltransferase 1.6 (PRMT16) from Arabidopsis thaliana (Mouse-ear cress).